The chain runs to 334 residues: ADP-L-glycero-D-manno-heptose-6-epimerase (334 aa).

NADP(+) contacts are provided by residues 11 to 12 (FI), 32 to 33 (DN), Lys-39, Lys-54, 77 to 81 (QGACS), and Asn-94. The active-site Proton acceptor is the Tyr-141. NADP(+) is bound at residue Lys-145. A substrate-binding site is contributed by Asn-171. Residues Val-172 and Lys-180 each coordinate NADP(+). Lys-180 functions as the Proton acceptor in the catalytic mechanism. Substrate contacts are provided by residues Arg-182, His-189, 203 to 206 (FGSN), Arg-216, and Tyr-295.

It belongs to the NAD(P)-dependent epimerase/dehydratase family. HldD subfamily. As to quaternary structure, homopentamer. The cofactor is NADP(+).

It carries out the reaction ADP-D-glycero-beta-D-manno-heptose = ADP-L-glycero-beta-D-manno-heptose. It functions in the pathway nucleotide-sugar biosynthesis; ADP-L-glycero-beta-D-manno-heptose biosynthesis; ADP-L-glycero-beta-D-manno-heptose from D-glycero-beta-D-manno-heptose 7-phosphate: step 4/4. Its pathway is bacterial outer membrane biogenesis; LOS core biosynthesis. Functionally, catalyzes the interconversion between ADP-D-glycero-beta-D-manno-heptose and ADP-L-glycero-beta-D-manno-heptose via an epimerization at carbon 6 of the heptose. This is ADP-L-glycero-D-manno-heptose-6-epimerase from Neisseria meningitidis serogroup A / serotype 4A (strain DSM 15465 / Z2491).